A 438-amino-acid polypeptide reads, in one-letter code: Trigger factor (438 aa).

Residues 163–248 (GDIITIDYEG…VKEIKRKELA (86 aa)) enclose the PPIase FKBP-type domain.

Belongs to the FKBP-type PPIase family. Tig subfamily.

The protein resides in the cytoplasm. The enzyme catalyses [protein]-peptidylproline (omega=180) = [protein]-peptidylproline (omega=0). Functionally, involved in protein export. Acts as a chaperone by maintaining the newly synthesized protein in an open conformation. Functions as a peptidyl-prolyl cis-trans isomerase. This Desulforudis audaxviator (strain MP104C) protein is Trigger factor.